A 293-amino-acid chain; its full sequence is Ribosomal protein L11 methyltransferase (293 aa).

Residues Thr145, Gly166, Asp188, and Asn230 each contribute to the S-adenosyl-L-methionine site.

It belongs to the methyltransferase superfamily. PrmA family.

The protein localises to the cytoplasm. The enzyme catalyses L-lysyl-[protein] + 3 S-adenosyl-L-methionine = N(6),N(6),N(6)-trimethyl-L-lysyl-[protein] + 3 S-adenosyl-L-homocysteine + 3 H(+). Its function is as follows. Methylates ribosomal protein L11. The protein is Ribosomal protein L11 methyltransferase of Haemophilus ducreyi (strain 35000HP / ATCC 700724).